The sequence spans 495 residues: Glutamate--tRNA ligase (495 aa).

Residues 14-24 (PSPTGYLHIGS) carry the 'HIGH' region motif. A 'KMSKS' region motif is present at residues 255–259 (KLSKR). Lysine 258 is a binding site for ATP.

It belongs to the class-I aminoacyl-tRNA synthetase family. Glutamate--tRNA ligase type 1 subfamily. Monomer.

It localises to the cytoplasm. The enzyme catalyses tRNA(Glu) + L-glutamate + ATP = L-glutamyl-tRNA(Glu) + AMP + diphosphate. Its function is as follows. Catalyzes the attachment of glutamate to tRNA(Glu) in a two-step reaction: glutamate is first activated by ATP to form Glu-AMP and then transferred to the acceptor end of tRNA(Glu). In Herpetosiphon aurantiacus (strain ATCC 23779 / DSM 785 / 114-95), this protein is Glutamate--tRNA ligase.